Reading from the N-terminus, the 2803-residue chain is Microtubule-associated protein 1A (2803 aa).

A phosphoserine mark is found at serine 114, serine 117, serine 118, serine 121, and serine 155. The residue at position 177 (tyrosine 177) is a Phosphotyrosine. Disordered regions lie at residues 302 to 466 (GAVP…DLKP) and 486 to 516 (IDRS…PLPT). Residues serine 319, serine 322, and serine 384 each carry the phosphoserine modification. Basic and acidic residues predominate over residues 335-390 (AKREEVVEEGAKEARSELAKELAKTEKKAKESSEKPPEKPAKPERVKTESSEALKA). A compositionally biased stretch (basic residues) spans 391-406 (EKRKLIKDKVGKKHLK). Basic and acidic residues-rich tracts occupy residues 407–464 (EKIS…KPDL) and 486–499 (IDRS…KELS). A run of 8 repeats spans residues 415 to 417 (KKD), 420 to 422 (KKE), 427 to 429 (RKE), 431 to 433 (KKD), 436 to 438 (RKE), 440 to 442 (KKD), 444 to 446 (KKE), and 449 to 451 (RKD). Residues 415 to 541 (KKDKEKKEIK…TQDFEEMKRE (127 aa)) form a 9 X 3 AA repeats of K-K-[DE] region. Threonine 504 carries the phosphothreonine modification. Residues serine 526 and serine 527 each carry the phosphoserine modification. Repeat unit 9 spans residues 539–541 (KRE). 2 stretches are compositionally biased toward basic and acidic residues: residues 539 to 554 (KREE…DTGL) and 585 to 596 (QEEHVMKEKELV). 5 disordered regions span residues 539–712 (KREE…KAPE), 734–806 (YIQD…GTPE), 847–1080 (EDQS…VNID), 1109–1548 (TGPI…EKKD), and 1573–1605 (EENH…EKVK). Phosphoserine occurs at positions 605 and 612. Residue threonine 616 is modified to Phosphothreonine. The span at 623 to 667 (WEEKKQREAERLPDRTEAREESEPEVKEDVIEKAELEEMEEVHPS) shows a compositional bias: basic and acidic residues. Phosphoserine occurs at positions 644, 667, and 787. Polar residues-rich tracts occupy residues 847 to 860 (EDQS…PQTE) and 871 to 883 (TVTS…TEAT). Phosphoserine occurs at positions 874, 877, 878, and 891. Threonine 894 carries the post-translational modification Phosphothreonine. Phosphoserine occurs at positions 896, 900, 909, 986, 996, 1004, 1013, 1019, and 1029. A compositionally biased stretch (basic and acidic residues) spans 1031–1065 (GDTKRTPGVGKEDAAEETVKPGPEEGTLEKEEKVP). 12 positions are modified to phosphoserine: serine 1069, serine 1144, serine 1146, serine 1160, serine 1172, serine 1190, serine 1200, serine 1203, serine 1209, serine 1218, serine 1221, and serine 1264. The span at 1131-1146 (KPQKDEVLRYPDRSLS) shows a compositional bias: basic and acidic residues. A compositionally biased stretch (polar residues) spans 1154-1169 (SVLSVPSPDTANQEPT). 2 stretches are compositionally biased toward polar residues: residues 1211–1224 (DVSS…SLGT) and 1264–1278 (SPPT…AQTD). Over residues 1289–1299 (PASSFSHSTPS) the composition is skewed to low complexity. A phosphoserine mark is found at serine 1326, serine 1329, serine 1544, serine 1600, and serine 1626. Composition is skewed to basic and acidic residues over residues 1338–1548 (IAIK…EKKD) and 1586–1605 (QEDK…EKVK). The segment covering 1632–1642 (RAREQEEKYWR) has biased composition (basic and acidic residues). Disordered regions lie at residues 1632 to 1684 (RARE…RYWR), 1713 to 1879 (DGQG…FSWG), and 1892 to 2673 (EGAA…LVNG). Serine 1654 bears the Phosphoserine mark. Residues 1655–1666 (PTREEPAGEQKE) are compositionally biased toward basic and acidic residues. Serine 1675, serine 1749, serine 1762, serine 1776, serine 1791, serine 1797, serine 1801, serine 1812, and serine 1818 each carry phosphoserine. Residues 1852–1867 (LPPAPLSPAPGPPTPA) show a composition bias toward pro residues. Residues 1907-1929 (KDYRKAEGEREEEGRAEAPDKSS) are compositionally biased toward basic and acidic residues. Serine 1931 is modified (phosphoserine). Basic and acidic residues predominate over residues 1951 to 1964 (PEQREPTPYPDERS). Threonine 1957 carries the phosphothreonine modification. The span at 2019–2033 (SPISPKSLQSDTPTF) shows a compositional bias: polar residues. The residue at position 2022 (serine 2022) is a Phosphoserine. The span at 2042 to 2066 (TVPPRPEPGPSMEPSLTPPAVPPRA) shows a compositional bias: pro residues. Threonine 2058 is modified (phosphothreonine). Phosphoserine is present on residues serine 2074, serine 2104, serine 2106, and serine 2108. A compositionally biased stretch (basic and acidic residues) spans 2086-2122 (PDRRSPSPKESGRSHWDDSTSDSELEKGAREQPEKEA). A compositionally biased stretch (pro residues) spans 2175–2184 (PAPPQLPSPA). Phosphoserine is present on residues serine 2235, serine 2252, serine 2256, serine 2259, and serine 2260. Positions 2257–2268 (EGSSSEATTPVI) are enriched in polar residues. Residues 2312-2325 (ASLDLALAPAPSLP) are compositionally biased toward low complexity. Residue serine 2449 is modified to Phosphoserine. The segment covering 2461 to 2473 (IDDRDLSTEEVRL) has biased composition (basic and acidic residues). Residues 2502–2514 (SASDSGSSQSDSD) show a composition bias toward low complexity. Over residues 2559 to 2575 (DPPPLPQPDPRPSPPRP) the composition is skewed to pro residues. The span at 2590–2602 (GRVERLREKEKVQ) shows a compositional bias: basic and acidic residues. A phosphoserine mark is found at serine 2649 and serine 2664.

This sequence belongs to the MAP1 family. In terms of assembly, 3 different light chains, LC1 (a cleavage product of MAP1B), LC2 (a cleavage product of MAP1A) and LC3 (produced by one of the MAP1LC3 genes), can associate with the MAP1A or MAP1B heavy chains. Interacts with TIAM2. Interacts with guanylate kinase-like domain of DLG1, DLG2 and DLG4. Binds to CSNK1D. As to quaternary structure, interacts with ELAVL4. Post-translationally, phosphorylated by CSNK1D. LC2 is generated from MAP1A by proteolytic processing. In terms of tissue distribution, brain.

Its subcellular location is the cytoplasm. The protein resides in the cytoskeleton. Its function is as follows. Structural protein involved in the filamentous cross-bridging between microtubules and other skeletal elements. The sequence is that of Microtubule-associated protein 1A (MAP1A) from Homo sapiens (Human).